The following is a 208-amino-acid chain: Large ribosomal subunit protein bL17 (208 aa).

A disordered region spans residues 122–208 (TEKKKKKPAK…ASEEAPPKTE (87 aa)). Over residues 151 to 179 (ADTPAPAAEESAPAKAAEPEAEAAAPEAE) the composition is skewed to low complexity.

This sequence belongs to the bacterial ribosomal protein bL17 family. Part of the 50S ribosomal subunit. Contacts protein L32.

In Desulfosudis oleivorans (strain DSM 6200 / JCM 39069 / Hxd3) (Desulfococcus oleovorans), this protein is Large ribosomal subunit protein bL17.